A 61-amino-acid polypeptide reads, in one-letter code: Small ribosomal subunit protein uS14 (61 aa).

Cys-24, Cys-27, Cys-40, and Cys-43 together coordinate Zn(2+).

It belongs to the universal ribosomal protein uS14 family. Zinc-binding uS14 subfamily. In terms of assembly, part of the 30S ribosomal subunit. Contacts proteins S3 and S10. Zn(2+) serves as cofactor.

Its function is as follows. Binds 16S rRNA, required for the assembly of 30S particles and may also be responsible for determining the conformation of the 16S rRNA at the A site. This chain is Small ribosomal subunit protein uS14, found in Carboxydothermus hydrogenoformans (strain ATCC BAA-161 / DSM 6008 / Z-2901).